A 256-amino-acid polypeptide reads, in one-letter code: Pimeloyl-[acyl-carrier protein] methyl ester esterase (256 aa).

The region spanning 15–242 is the AB hydrolase-1 domain; it reads HLVLLHGWGL…AAHAPFISHP (228 aa). Substrate contacts are provided by residues W22, 82–83, and 143–147; these read SL and FLALQ. S82 functions as the Nucleophile in the catalytic mechanism. Residues D207 and H235 contribute to the active site. Substrate is bound at residue H235.

This sequence belongs to the AB hydrolase superfamily. Carboxylesterase BioH family. As to quaternary structure, monomer.

The protein localises to the cytoplasm. The enzyme catalyses 6-carboxyhexanoyl-[ACP] methyl ester + H2O = 6-carboxyhexanoyl-[ACP] + methanol + H(+). The protein operates within cofactor biosynthesis; biotin biosynthesis. The physiological role of BioH is to remove the methyl group introduced by BioC when the pimeloyl moiety is complete. It allows to synthesize pimeloyl-ACP via the fatty acid synthetic pathway through the hydrolysis of the ester bonds of pimeloyl-ACP esters. The chain is Pimeloyl-[acyl-carrier protein] methyl ester esterase from Escherichia coli O7:K1 (strain IAI39 / ExPEC).